A 421-amino-acid polypeptide reads, in one-letter code: Testin (421 aa).

In terms of domain architecture, PET spans 92 to 199 (MILTNPVAAK…GDVKLPREMD (108 aa)). The segment at 133-164 (EKQPVAGSEGAQYRKKQLAKQLPAHDQDPSKC) is disordered. Over residues 155–164 (PAHDQDPSKC) the composition is skewed to basic and acidic residues. LIM zinc-binding domains follow at residues 234–297 (YSCY…CDSE), 299–359 (PRCA…NHAV), and 362–421 (QGCH…KMMS).

It belongs to the prickle / espinas / testin family. As to quaternary structure, interacts via LIM domain 1 with ZYX. Interacts (via LIM domain 3) with ENAH and VASP. Interacts with ALKBH4, talin, actin, alpha-actinin, GRIP1 and PXN. Interacts (via LIM domain 2) with ACTL7A (via N-terminus). Heterodimer with ACTL7A; the heterodimer interacts with ENAH to form a heterotrimer.

It is found in the cytoplasm. It localises to the cell junction. The protein localises to the focal adhesion. Functionally, scaffold protein that may play a role in cell adhesion, cell spreading and in the reorganization of the actin cytoskeleton. Plays a role in the regulation of cell proliferation. May act as a tumor suppressor. This Mustela putorius furo (European domestic ferret) protein is Testin (TES).